A 521-amino-acid chain; its full sequence is Probable cytochrome P450 12d1 proximal, mitochondrial (521 aa).

The transit peptide at 1-19 directs the protein to the mitochondrion; it reads MNTLSSARSVAIYVGPVRS. Position 467 (cysteine 467) interacts with heme.

This sequence belongs to the cytochrome P450 family. The cofactor is heme.

It localises to the mitochondrion membrane. The protein is Probable cytochrome P450 12d1 proximal, mitochondrial (Cyp12d1-p) of Drosophila melanogaster (Fruit fly).